The primary structure comprises 648 residues: Forkhead box protein N1 (648 aa).

The disordered stretch occupies residues 1–95; sequence MVSLLPPQSD…PGPGSFRLSP (95 aa). The segment covering 38–50 has biased composition (polar residues); the sequence is APQNKHANFSCSS. Positions 54–67 are enriched in pro residues; sequence DGPPERTPSLPPHS. Residues 271–367 constitute a DNA-binding region (fork-head); the sequence is KPIYSYSILI…EELQKWKRKD (97 aa). 3 disordered regions span residues 392–432, 457–521, and 629–648; these read LGSP…APGP, HLSP…TLLP, and SAAA…LALA. Positions 398–412 are enriched in pro residues; that stretch reads GCPPPGLAGPGPIRP.

As to expression, bone marrow (at protein level). Expressed in thymus and skin.

It localises to the nucleus. Its function is as follows. Transcriptional regulator which regulates the development, differentiation, and function of thymic epithelial cells (TECs) both in the prenatal and postnatal thymus. Acts as a master regulator of the TECs lineage development and is required from the onset of differentiation in progenitor TECs in the developing fetus to the final differentiation steps through which TECs mature to acquire their full functionality. Regulates, either directly or indirectly the expression of a variety of genes that mediate diverse aspects of thymus development and function, including MHC Class II, DLL4, CCL25, CTSL, CD40 and PAX1. Regulates the differentiation of the immature TECs into functional cortical TECs (cTECs) and medullary TECs (mTECs). Essential for maintenance of mTECs population in the postnatal thymus. Involved in the morphogenesis and maintenance of the three-dimensional thymic microstructure which is necessary for a fully functional thymus. Plays an important role in the maintenance of hematopoiesis and particularly T lineage progenitors within the bone marrow niche with age. Essential for the vascularization of the thymus anlage. Promotes the terminal differentiation of epithelial cells in the epidermis and hair follicles, partly by negatively regulating the activity of protein kinase C. The polypeptide is Forkhead box protein N1 (Foxn1) (Mus musculus (Mouse)).